Consider the following 444-residue polypeptide: Tubulin beta chain (444 aa).

The GTP site is built by Q11, E69, S138, G142, T143, G144, N204, and N226. Residue E69 coordinates Mg(2+). The segment at 423 to 444 (QQYQDATAEEEGEFDDEEEMDV) is disordered. Acidic residues predominate over residues 429 to 444 (TAEEEGEFDDEEEMDV).

It belongs to the tubulin family. Dimer of alpha and beta chains. A typical microtubule is a hollow water-filled tube with an outer diameter of 25 nm and an inner diameter of 15 nM. Alpha-beta heterodimers associate head-to-tail to form protofilaments running lengthwise along the microtubule wall with the beta-tubulin subunit facing the microtubule plus end conferring a structural polarity. Microtubules usually have 13 protofilaments but different protofilament numbers can be found in some organisms and specialized cells. Mg(2+) is required as a cofactor.

It localises to the cytoplasm. The protein localises to the cytoskeleton. Its function is as follows. Tubulin is the major constituent of microtubules, a cylinder consisting of laterally associated linear protofilaments composed of alpha- and beta-tubulin heterodimers. Microtubules grow by the addition of GTP-tubulin dimers to the microtubule end, where a stabilizing cap forms. Below the cap, tubulin dimers are in GDP-bound state, owing to GTPase activity of alpha-tubulin. The polypeptide is Tubulin beta chain (Euplotes focardii).